Reading from the N-terminus, the 47-residue chain is Potassium channel toxin TcoKIK (47 aa).

Residues 14–47 enclose the BetaSPN-type CS-alpha/beta domain; it reads EYACPAIDKFCEDHCAAKKAVGKCDDFKCNCIKL. 3 disulfide bridges follow: Cys-17-Cys-37, Cys-24-Cys-42, and Cys-28-Cys-44.

The protein belongs to the long chain scorpion toxin family. Class 2 subfamily. As to expression, expressed by the venom gland.

Its subcellular location is the secreted. The protein localises to the target cell membrane. Its function is as follows. Blocks voltage-gated potassium channels. Its application (10 uM) to cells recombinantly expressing channels results in membrane damage and cell lysis. This chain is Potassium channel toxin TcoKIK, found in Tityus costatus (Brazilian scorpion).